Here is a 568-residue protein sequence, read N- to C-terminus: Dihydroxy-acid dehydratase (568 aa).

C59 lines the [2Fe-2S] cluster pocket. D91 serves as a coordination point for Mg(2+). C132 lines the [2Fe-2S] cluster pocket. The Mg(2+) site is built by D133 and K134. K134 bears the N6-carboxylysine mark. Residue C204 coordinates [2Fe-2S] cluster. E456 is a Mg(2+) binding site. Catalysis depends on S482, which acts as the Proton acceptor.

The protein belongs to the IlvD/Edd family. Homodimer. The cofactor is [2Fe-2S] cluster. It depends on Mg(2+) as a cofactor.

The enzyme catalyses (2R)-2,3-dihydroxy-3-methylbutanoate = 3-methyl-2-oxobutanoate + H2O. It carries out the reaction (2R,3R)-2,3-dihydroxy-3-methylpentanoate = (S)-3-methyl-2-oxopentanoate + H2O. The protein operates within amino-acid biosynthesis; L-isoleucine biosynthesis; L-isoleucine from 2-oxobutanoate: step 3/4. It participates in amino-acid biosynthesis; L-valine biosynthesis; L-valine from pyruvate: step 3/4. Functions in the biosynthesis of branched-chain amino acids. Catalyzes the dehydration of (2R,3R)-2,3-dihydroxy-3-methylpentanoate (2,3-dihydroxy-3-methylvalerate) into 2-oxo-3-methylpentanoate (2-oxo-3-methylvalerate) and of (2R)-2,3-dihydroxy-3-methylbutanoate (2,3-dihydroxyisovalerate) into 2-oxo-3-methylbutanoate (2-oxoisovalerate), the penultimate precursor to L-isoleucine and L-valine, respectively. This Verminephrobacter eiseniae (strain EF01-2) protein is Dihydroxy-acid dehydratase.